The chain runs to 66 residues: Disk-determining factor A (66 aa).

Functionally, involved in cell-shape determination. Required for the formation of disks. The protein is Disk-determining factor A of Haloferax volcanii (strain ATCC 29605 / DSM 3757 / JCM 8879 / NBRC 14742 / NCIMB 2012 / VKM B-1768 / DS2) (Halobacterium volcanii).